Consider the following 536-residue polypeptide: SNW domain-containing protein 1 (536 aa).

The interval 1 to 46 (MALTSFLPAPTQLSQDQLEAEEKARSQRSRQTSLVSSRREPPPYGY) is disordered. N-acetylalanine is present on A2. Phosphoserine is present on S14. Residue K23 forms a Glycyl lysine isopeptide (Lys-Gly) (interchain with G-Cter in SUMO2) linkage. An interaction with PPIL1 region spans residues 59-79 (GDGGAFPEIHVAQYPLDMGRK). Residues K81, K97, K115, K122, K141, K158, and K170 each participate in a glycyl lysine isopeptide (Lys-Gly) (interchain with G-Cter in SUMO2) cross-link. An SNW region spans residues 174–339 (AQYIRYTPSQ…KARERRAGIK (166 aa)). 2 positions are modified to phosphoserine: S182 and S190. A Glycyl lysine isopeptide (Lys-Gly) (interchain with G-Cter in SUMO2) cross-link involves residue K193. Residues 209-234 (PPRFKINKKIPRGPPSPPAPVMHSPS) are disordered. Phosphoserine is present on residues S224, S232, and S234. Residues K240, K258, K286, K339, K344, K416, and K441 each participate in a glycyl lysine isopeptide (Lys-Gly) (interchain with G-Cter in SUMO2) cross-link. Residues 311–386 (KMAQKEKEKH…RSKLQRNENR (76 aa)) are disordered. A Phosphoserine modification is found at S446. K452 participates in a covalent cross-link: Glycyl lysine isopeptide (Lys-Gly) (interchain with G-Cter in SUMO2). Composition is skewed to basic and acidic residues over residues 469 to 489 (TNRF…RGRE) and 503 to 530 (KFLE…EHEG). Residues 469 to 536 (TNRFVPDKEF…EHEGKKRRKE (68 aa)) form a disordered region. A phosphoserine mark is found at S479 and S481. K509 participates in a covalent cross-link: Glycyl lysine isopeptide (Lys-Gly) (interchain with G-Cter in SUMO2).

It belongs to the SNW family. As to quaternary structure, identified in the spliceosome C complex. Associates with U4/U6-U5 tri-small nuclear ribonucleoproteins (U4/U6-U5 tri-snRNPs). Component of the minor spliceosome, which splices U12-type introns. Interacts with SKI, SMAD2,SMAD3, RBPJ, RB1, PABPN1, MAGEA1, SIRT1, FOXN3, U2AF2, PPIL1, DAXX and ATP1B4. Interacts with VDR and RXRA; preferentially associates with VDR:RXRA heterodimers. Interacts with NCOR2. Interacts with MAML1. Interacts with NOTCH1 NICD; the interaction involves multimerized NOTCH1 NICD. Forms a complex with NOTCH1 NICD and MAML1; the association is dissociated by RBPJ. Associates with positive transcription elongation factor b (P-TEFb). Component of the SNARP complex which consists at least of SNIP1, SNW1, THRAP3, BCLAF1 and PNN.

The protein localises to the nucleus. Involved in pre-mRNA splicing as component of the spliceosome. As a component of the minor spliceosome, involved in the splicing of U12-type introns in pre-mRNAs. Required in the specific splicing of CDKN1A pre-mRNA; the function probably involves the recruitment of U2AF2 to the mRNA. May recruit PPIL1 to the spliceosome. May be involved in cyclin-D1/CCND1 mRNA stability through the SNARP complex which associates with both the 3'end of the CCND1 gene and its mRNA. Involved in transcriptional regulation. Modulates TGF-beta-mediated transcription via association with SMAD proteins, MYOD1-mediated transcription via association with PABPN1, RB1-mediated transcriptional repression, and retinoid-X receptor (RXR)- and vitamin D receptor (VDR)-dependent gene transcription in a cell line-specific manner probably involving coactivators NCOA1 and GRIP1. Is involved in NOTCH1-mediated transcriptional activation. Binds to multimerized forms of Notch intracellular domain (NICD) and is proposed to recruit transcriptional coactivators such as MAML1 to form an intermediate preactivation complex which associates with DNA-bound CBF-1/RBPJ to form a transcriptional activation complex by releasing SNW1 and redundant NOTCH1 NICD. The chain is SNW domain-containing protein 1 (SNW1) from Pongo abelii (Sumatran orangutan).